A 493-amino-acid polypeptide reads, in one-letter code: Inosine-5'-monophosphate dehydrogenase (493 aa).

CBS domains follow at residues 97-155 (VIID…NAPI) and 159-219 (MTSE…AKDE). NAD(+)-binding positions include Asp-253 and 303-305 (GIG). Residues Gly-305 and Gly-307 each coordinate K(+). Ser-308 is a binding site for IMP. Position 310 (Cys-310) interacts with K(+). Cys-310 functions as the Thioimidate intermediate in the catalytic mechanism. IMP is bound by residues 343–345 (DGG), 366–367 (GS), and 390–394 (YRGMG). Arg-406 functions as the Proton acceptor in the catalytic mechanism. Residue Glu-421 coordinates IMP. K(+) is bound by residues Glu-475, Ser-476, and His-477.

It belongs to the IMPDH/GMPR family. Homotetramer. The cofactor is K(+).

The enzyme catalyses IMP + NAD(+) + H2O = XMP + NADH + H(+). It participates in purine metabolism; XMP biosynthesis via de novo pathway; XMP from IMP: step 1/1. Its activity is regulated as follows. Mycophenolic acid (MPA) is a non-competitive inhibitor that prevents formation of the closed enzyme conformation by binding to the same site as the amobile flap. In contrast, mizoribine monophosphate (MZP) is a competitive inhibitor that induces the closed conformation. MPA is a potent inhibitor of mammalian IMPDHs but a poor inhibitor of the bacterial enzymes. MZP is a more potent inhibitor of bacterial IMPDH. In terms of biological role, catalyzes the conversion of inosine 5'-phosphate (IMP) to xanthosine 5'-phosphate (XMP), the first committed and rate-limiting step in the de novo synthesis of guanine nucleotides, and therefore plays an important role in the regulation of cell growth. This chain is Inosine-5'-monophosphate dehydrogenase, found in Streptococcus pyogenes serotype M3 (strain ATCC BAA-595 / MGAS315).